Consider the following 1197-residue polypeptide: Disease resistance-like protein CSA1 (1197 aa).

The 164-residue stretch at 15–178 (PQDQVFINFR…IIIRKVKEIL (164 aa)) folds into the TIR domain. Glu89 is a catalytic residue. Residues 210–480 (RIKQLEEKLR…ACFRSQDENY (271 aa)) enclose the NB-ARC domain. LRR repeat units follow at residues 614 to 636 (LNEV…DFNP), 638 to 659 (NLVD…NKDA), 694 to 716 (TALK…NLRG), 728 to 749 (LISL…QVIS), 750 to 774 (DKLE…RLQR), 776 to 796 (VMLN…LGQL), 797 to 819 (KALE…TWGN), 820 to 843 (MSRL…LSVR), 845 to 862 (LCLN…LLNK), and 863 to 889 (FSQL…NLQY).

It carries out the reaction NAD(+) + H2O = ADP-D-ribose + nicotinamide + H(+). TIR-NB-LRR receptor-like protein that functions in photomorphogenic development. May function downstream of phytochrome B (phyB) signaling. This Arabidopsis thaliana (Mouse-ear cress) protein is Disease resistance-like protein CSA1.